The primary structure comprises 158 residues: MAQEKVFPMTETGKKKLEEELEYLKTVKRKEVVERIKVARSFGDLSENSEYDSAKEEQAFVEGRITTLDNMIRNAKIIEDDGANSDIVSLGKTVTFTELPDGEEESYTIVGSAEADPFEGKISNDSPIAKSLLGKQVGDEVTVQTPGGEMLVKIVKIS.

It belongs to the GreA/GreB family.

Functionally, necessary for efficient RNA polymerase transcription elongation past template-encoded arresting sites. The arresting sites in DNA have the property of trapping a certain fraction of elongating RNA polymerases that pass through, resulting in locked ternary complexes. Cleavage of the nascent transcript by cleavage factors such as GreA or GreB allows the resumption of elongation from the new 3'terminus. GreA releases sequences of 2 to 3 nucleotides. This Bacillus licheniformis (strain ATCC 14580 / DSM 13 / JCM 2505 / CCUG 7422 / NBRC 12200 / NCIMB 9375 / NCTC 10341 / NRRL NRS-1264 / Gibson 46) protein is Transcription elongation factor GreA.